The sequence spans 469 residues: Glutamate--tRNA ligase (469 aa).

A 'HIGH' region motif is present at residues 11-21; it reads PSPTGFIHLGN. The short motif at 243–247 is the 'KMSKS' region element; that stretch reads KMSKR. K246 serves as a coordination point for ATP.

Belongs to the class-I aminoacyl-tRNA synthetase family. Glutamate--tRNA ligase type 1 subfamily. Monomer.

It localises to the cytoplasm. The catalysed reaction is tRNA(Glu) + L-glutamate + ATP = L-glutamyl-tRNA(Glu) + AMP + diphosphate. Functionally, catalyzes the attachment of glutamate to tRNA(Glu) in a two-step reaction: glutamate is first activated by ATP to form Glu-AMP and then transferred to the acceptor end of tRNA(Glu). The protein is Glutamate--tRNA ligase of Burkholderia ambifaria (strain MC40-6).